Consider the following 78-residue polypeptide: Acyl carrier protein (78 aa).

One can recognise a Carrier domain in the interval 2–77 (SEIASRVKAI…DAVSYIEEHA (76 aa)). Position 37 is an O-(pantetheine 4'-phosphoryl)serine (serine 37).

The protein belongs to the acyl carrier protein (ACP) family. In terms of processing, 4'-phosphopantetheine is transferred from CoA to a specific serine of apo-ACP by AcpS. This modification is essential for activity because fatty acids are bound in thioester linkage to the sulfhydryl of the prosthetic group.

The protein localises to the cytoplasm. The protein operates within lipid metabolism; fatty acid biosynthesis. Carrier of the growing fatty acid chain in fatty acid biosynthesis. The polypeptide is Acyl carrier protein (Bacteroides thetaiotaomicron (strain ATCC 29148 / DSM 2079 / JCM 5827 / CCUG 10774 / NCTC 10582 / VPI-5482 / E50)).